Consider the following 156-residue polypeptide: Deoxyuridine 5'-triphosphate nucleotidohydrolase (156 aa).

Substrate contacts are provided by residues 76–78 (RSG), asparagine 89, 93–95 (TVD), and lysine 103.

This sequence belongs to the dUTPase family. Mg(2+) is required as a cofactor.

The catalysed reaction is dUTP + H2O = dUMP + diphosphate + H(+). The protein operates within pyrimidine metabolism; dUMP biosynthesis; dUMP from dCTP (dUTP route): step 2/2. Functionally, this enzyme is involved in nucleotide metabolism: it produces dUMP, the immediate precursor of thymidine nucleotides and it decreases the intracellular concentration of dUTP so that uracil cannot be incorporated into DNA. The polypeptide is Deoxyuridine 5'-triphosphate nucleotidohydrolase (Rhizobium leguminosarum bv. trifolii (strain WSM2304)).